A 311-amino-acid chain; its full sequence is Formimidoylglutamase (311 aa).

6 residues coordinate Mn(2+): histidine 130, aspartate 155, histidine 157, aspartate 159, cysteine 242, and aspartate 244.

Belongs to the arginase family. Mn(2+) serves as cofactor.

It carries out the reaction N-formimidoyl-L-glutamate + H2O = formamide + L-glutamate. It functions in the pathway amino-acid degradation; L-histidine degradation into L-glutamate; L-glutamate from N-formimidoyl-L-glutamate (hydrolase route): step 1/1. Its function is as follows. Catalyzes the conversion of N-formimidoyl-L-glutamate to L-glutamate and formamide. The chain is Formimidoylglutamase from Staphylococcus aureus (strain MSSA476).